The following is a 201-amino-acid chain: MARYTGPATRVSRRLRVDLVGGDMAFERRPYPPGQAGRNRIKESEYLLQLQEKQKAKYTYGVLERQFRRYYAEANRLPGKTGDNLVVLLESRLDNVIYRAGLANTRRQARQLVSHGHFTVNGKKINVPSFRVTQYDIIDVRERSQKMEWFEEAQDRLVDANVPAWLQVVPDTLRILVHQLPERAQIDVPLQEQLIVELYSK.

The 64-residue stretch at 91-154 folds into the S4 RNA-binding domain; it reads SRLDNVIYRA…QKMEWFEEAQ (64 aa).

The protein belongs to the universal ribosomal protein uS4 family. In terms of assembly, part of the 30S ribosomal subunit. Contacts protein S5. The interaction surface between S4 and S5 is involved in control of translational fidelity.

One of the primary rRNA binding proteins, it binds directly to 16S rRNA where it nucleates assembly of the body of the 30S subunit. In terms of biological role, with S5 and S12 plays an important role in translational accuracy. The protein is Small ribosomal subunit protein uS4 of Corynebacterium aurimucosum (strain ATCC 700975 / DSM 44827 / CIP 107346 / CN-1) (Corynebacterium nigricans).